Reading from the N-terminus, the 91-residue chain is Signal peptidase complex subunit 1 (91 aa).

At 1–28 (MEIFNDLSRKLVFPIDYPSQRRVAKLTD) the chain is on the cytoplasmic side. Residues 29-48 (IILGSGTLVSCLLGFYAGSL) form a helical membrane-spanning segment. At 49–51 (SLT) the chain is on the lumenal side. Residues 52–71 (LYAFAAAYGLALLLVVPAYG) traverse the membrane as a helical segment. At 72–91 (KYRQQKLAWVGSAAATTKDL) the chain is on the cytoplasmic side.

It belongs to the SPCS1 family. In terms of assembly, component of the signal peptidase complex (SPC) composed of a catalytic subunit SEC11 and three accessory subunits SPC1, SPC2 and SPC3. The complex induces a local thinning of the ER membrane which is used to measure the length of the signal peptide (SP) h-region of protein substrates. This ensures the selectivity of the complex towards h-regions shorter than 18-20 amino acids. SPC associates with the translocon complex.

It localises to the endoplasmic reticulum membrane. In terms of biological role, component of the signal peptidase complex (SPC) which catalyzes the cleavage of N-terminal signal sequences from nascent proteins as they are translocated into the lumen of the endoplasmic reticulum. Dispensable for SPC enzymatic activity. In Eremothecium gossypii (strain ATCC 10895 / CBS 109.51 / FGSC 9923 / NRRL Y-1056) (Yeast), this protein is Signal peptidase complex subunit 1 (SPC1).